A 429-amino-acid chain; its full sequence is Protein ABERRANT PANICLE ORGANIZATION 1 (429 aa).

Residues 1–11 (MMNPRRLPPLP) are compositionally biased toward pro residues. The tract at residues 1–21 (MMNPRRLPPLPSSTSSASAAD) is disordered. The 47-residue stretch at 25–71 (PRVWRRLPQPLVDRILACLPTPSFLRLRAACRRFYHLLFSSPFLHSH) folds into the F-box domain. 2 consecutive transmembrane segments (helical) span residues 72–92 (LLLSPHLPFFAFVVPAAGHLL) and 112–132 (VAGGPAAFSPAAASAGLLAFL). Kelch repeat units lie at residues 229-277 (MAFA…ELGG), 284-339 (RVAL…AEGG), and 350-397 (YVVL…GAAG).

As to quaternary structure, part of a putative SCF (ASK/Cullin/F-box) ubiquitin ligase complex. Interacts with FL/APO2. In terms of tissue distribution, expressed in apical meristems and the lateral organ primordia throughout development. Expressed in seedlings, roots, leaves, shoot apical meristem (SAM), developing panicles, and, at lower levels, in developing seeds.

It localises to the membrane. The protein operates within protein modification; protein ubiquitination. Functionally, component of SCF(ASK-cullin-F-box) E3 ubiquitin ligase complexes, which may mediate the ubiquitination and subsequent proteasomal degradation of target proteins. Together with FL/APO2, involved in the temporal regulation of meristem identity during both vegetative and reproductive developments in an APO2-dependent manner. Promotes spikelet formation by suppressing the precocious conversion of inflorescence meristems to spikelet meristems, probably via a positive regulation of class-C floral homeotic genes, but not of class-B genes, and through the control of cell proliferation in meristems. Mediates culm development and strength/diameter enhancement at internodes. Required for the regulation of the plastochron, floral organ identity, and floral determinacy. Controls the number of primary rachis branches (PRBs). May trigger the formation of vascular bundle systems which, consequently, promote carbohydrate translocation to panicles. Involved in ozone-induced grain yield regulation. In Oryza sativa subsp. japonica (Rice), this protein is Protein ABERRANT PANICLE ORGANIZATION 1.